We begin with the raw amino-acid sequence, 450 residues long: Probable ECA polymerase (450 aa).

11 helical membrane passes run 6–26 (FSGL…LTWF), 37–57 (VFFS…TSVL), 63–83 (VGVA…CFYA), 118–138 (VILM…NGFL), 155–175 (GVAL…VYFL), 181–201 (AWLF…MIVG), 207–227 (IIIA…ISLW), 228–248 (MLAA…LKRY), 341–361 (LVVM…GLII), 378–398 (YKAA…IVLA), and 410–430 (VFFI…YWLF).

The protein belongs to the WzyE family. In terms of assembly, probably part of a complex composed of WzxE, WzyE and WzzE.

The protein resides in the cell inner membrane. It functions in the pathway bacterial outer membrane biogenesis; enterobacterial common antigen biosynthesis. Probably involved in the polymerization of enterobacterial common antigen (ECA) trisaccharide repeat units. The protein is Probable ECA polymerase of Shigella sonnei (strain Ss046).